The sequence spans 320 residues: BTB and MATH domain-containing protein 36 (320 aa).

The region spanning 7-136 (KGSIRFEIQN…DKHAVLEVQI (130 aa)) is the MATH domain. In terms of domain architecture, BTB spans 160-227 (TDVVLVLEGK…IYPTHMLINS (68 aa)).

This is BTB and MATH domain-containing protein 36 (bath-36) from Caenorhabditis elegans.